Reading from the N-terminus, the 337-residue chain is Putative tRNA (cytidine(32)/guanosine(34)-2'-O)-methyltransferase (337 aa).

Residues glycine 53, tryptophan 55, aspartate 76, aspartate 92, and aspartate 117 each coordinate S-adenosyl-L-methionine. Lysine 157 serves as the catalytic Proton acceptor. Basic and acidic residues-rich tracts occupy residues 304-318 (LKAELSRGKDQKKTP) and 327-337 (ELEKAAEKFQL). A disordered region spans residues 304 to 337 (LKAELSRGKDQKKTPAENVPSVEELEKAAEKFQL).

It belongs to the class I-like SAM-binding methyltransferase superfamily. RNA methyltransferase RlmE family. TRM7 subfamily.

It is found in the cytoplasm. The catalysed reaction is cytidine(32)/guanosine(34) in tRNA + 2 S-adenosyl-L-methionine = 2'-O-methylcytidine(32)/2'-O-methylguanosine(34) in tRNA + 2 S-adenosyl-L-homocysteine + 2 H(+). In terms of biological role, methylates the 2'-O-ribose of nucleotides at positions 32 and 34 of the tRNA anticodon loop of substrate tRNAs. The polypeptide is Putative tRNA (cytidine(32)/guanosine(34)-2'-O)-methyltransferase (Caenorhabditis elegans).